We begin with the raw amino-acid sequence, 357 residues long: 4-hydroxymandelate synthase (357 aa).

2 VOC domains span residues 5-129 (EIDY…LIQR) and 158-309 (GIDH…IFTA). H161 is a binding site for Fe cation. Residues H161, S201, T214, H241, and Q305 each coordinate substrate. H241 contacts Fe cation. E320 is a binding site for Fe cation.

This sequence belongs to the 4HPPD family. In terms of assembly, monomer. Requires Fe cation as cofactor.

It carries out the reaction 3-(4-hydroxyphenyl)pyruvate + O2 = (S)-4-hydroxymandelate + CO2. Its pathway is antibiotic biosynthesis; vancomycin biosynthesis. Required to synthesize hydroxyphenylglycine, a recurring skeletal component of nonproteinogenic macrocyclic peptide antibiotics such as vancomycin. Catalyzes the conversion of p-hydroxyphenylpyruvate to p-hydroxymandelate. The decarboxylation and hydroxylation activities of HmaS show novel and distinct regioselectivity, compared to all other known p-hydroxyphenylpyruvate dioxygenases, by hydroxylating the benzylic position of the substrate instead of the phenyl ring. The sequence is that of 4-hydroxymandelate synthase from Amycolatopsis orientalis (Nocardia orientalis).